A 315-amino-acid polypeptide reads, in one-letter code: tRNA dimethylallyltransferase (315 aa).

ATP is bound at residue 13–20 (GPTASGKS). 15–20 (TASGKS) lines the substrate pocket. 2 interaction with substrate tRNA regions span residues 38-41 (DSMQ) and 162-166 (QRLAR).

Belongs to the IPP transferase family. As to quaternary structure, monomer. The cofactor is Mg(2+).

It carries out the reaction adenosine(37) in tRNA + dimethylallyl diphosphate = N(6)-dimethylallyladenosine(37) in tRNA + diphosphate. Its function is as follows. Catalyzes the transfer of a dimethylallyl group onto the adenine at position 37 in tRNAs that read codons beginning with uridine, leading to the formation of N6-(dimethylallyl)adenosine (i(6)A). This Paramagnetospirillum magneticum (strain ATCC 700264 / AMB-1) (Magnetospirillum magneticum) protein is tRNA dimethylallyltransferase.